Reading from the N-terminus, the 142-residue chain is Putative tyrosine phosphatase 123R (142 aa).

Residues 2–137 (EPTKIVENLY…LAQFERWLNS (136 aa)) form the Tyrosine-protein phosphatase domain. The active-site Phosphocysteine intermediate is cysteine 81.

This sequence belongs to the protein-tyrosine phosphatase family.

The chain is Putative tyrosine phosphatase 123R from Invertebrate iridescent virus 6 (IIV-6).